A 421-amino-acid polypeptide reads, in one-letter code: Serine--tRNA ligase (421 aa).

L-serine is bound at residue 230–232 (TAE). 259–261 (RRE) lines the ATP pocket. Glu-282 serves as a coordination point for L-serine. ATP is bound at residue 346 to 349 (EISS). Residue Ser-380 participates in L-serine binding.

The protein belongs to the class-II aminoacyl-tRNA synthetase family. Type-1 seryl-tRNA synthetase subfamily. In terms of assembly, homodimer. The tRNA molecule binds across the dimer.

Its subcellular location is the cytoplasm. It catalyses the reaction tRNA(Ser) + L-serine + ATP = L-seryl-tRNA(Ser) + AMP + diphosphate + H(+). The enzyme catalyses tRNA(Sec) + L-serine + ATP = L-seryl-tRNA(Sec) + AMP + diphosphate + H(+). Its pathway is aminoacyl-tRNA biosynthesis; selenocysteinyl-tRNA(Sec) biosynthesis; L-seryl-tRNA(Sec) from L-serine and tRNA(Sec): step 1/1. Catalyzes the attachment of serine to tRNA(Ser). Is also able to aminoacylate tRNA(Sec) with serine, to form the misacylated tRNA L-seryl-tRNA(Sec), which will be further converted into selenocysteinyl-tRNA(Sec). The sequence is that of Serine--tRNA ligase from Methanosarcina acetivorans (strain ATCC 35395 / DSM 2834 / JCM 12185 / C2A).